Reading from the N-terminus, the 373-residue chain is RNA 3'-terminal phosphate cyclase-like protein (373 aa).

Belongs to the RNA 3'-terminal cyclase family. Type 2 subfamily. In terms of assembly, part of the small subunit (SSU) processome, composed of more than 70 proteins and the RNA chaperone small nucleolar RNA (snoRNA) U3. Interacts with BMS1.

It localises to the nucleus. It is found in the nucleolus. In terms of biological role, as part of the small subunit (SSU) processome, it plays a role in 40S-ribosomal-subunit biogenesis in the early pre-rRNA processing steps at sites A0, A1 and A2 that are required for proper maturation of the 18S RNA. Activates BMS1 by promoting GDP/GTP exchange. Does not have cyclase activity. This is RNA 3'-terminal phosphate cyclase-like protein (RCL1) from Bos taurus (Bovine).